The sequence spans 520 residues: GMP synthase [glutamine-hydrolyzing] (520 aa).

Residues 12 to 205 (KIIVLDYGSQ…AISICGARGD (194 aa)) enclose the Glutamine amidotransferase type-1 domain. Cys89 acts as the Nucleophile in catalysis. Catalysis depends on residues His179 and Glu181. One can recognise a GMPS ATP-PPase domain in the interval 206–395 (WSMDNFIDME…LGMPEEIVWR (190 aa)). 233–239 (SGGVDSS) is an ATP binding site.

Homodimer.

The catalysed reaction is XMP + L-glutamine + ATP + H2O = GMP + L-glutamate + AMP + diphosphate + 2 H(+). It participates in purine metabolism; GMP biosynthesis; GMP from XMP (L-Gln route): step 1/1. In terms of biological role, catalyzes the synthesis of GMP from XMP. The chain is GMP synthase [glutamine-hydrolyzing] from Streptococcus pyogenes serotype M1.